A 511-amino-acid chain; its full sequence is Cytochrome P450 705A5 (511 aa).

Residues 12 to 30 form a helical membrane-spanning segment; that stretch reads CFIFLLLCLFSRLSYDLFF. Residue C454 coordinates heme.

It belongs to the cytochrome P450 family. It depends on heme as a cofactor. As to expression, expressed primarily in the root epidermis.

It is found in the membrane. In terms of biological role, converts thalian-diol to a desaturated thalian-diol. The polypeptide is Cytochrome P450 705A5 (CYP705A5) (Arabidopsis thaliana (Mouse-ear cress)).